Consider the following 139-residue polypeptide: Small ribosomal subunit protein uS11 (139 aa).

Residues 1-13 (MAKQAAKGSAAAT) show a composition bias toward low complexity. Positions 1 to 30 (MAKQAAKGSAAATKRQRGKRREKKNVPRGQ) are disordered. Basic residues predominate over residues 14-23 (KRQRGKRREK).

It belongs to the universal ribosomal protein uS11 family. Part of the 30S ribosomal subunit. Interacts with proteins S7 and S18. Binds to IF-3.

In terms of biological role, located on the platform of the 30S subunit, it bridges several disparate RNA helices of the 16S rRNA. Forms part of the Shine-Dalgarno cleft in the 70S ribosome. In Roseiflexus sp. (strain RS-1), this protein is Small ribosomal subunit protein uS11.